Consider the following 314-residue polypeptide: Probable phytol kinase 1, chloroplastic (314 aa).

The transit peptide at 1 to 62 (MAAAARPVDV…GVGAAAAPAV (62 aa)) directs the protein to the chloroplast. The next 7 membrane-spanning stretches (helical) occupy residues 72 to 91 (AALR…YSLV), 111 to 131 (IVHV…SNST), 135 to 155 (FFAA…GLRL), 181 to 201 (YVIV…IGIV), 234 to 254 (IGSI…LFYF), 266 to 286 (LALG…CIPV), and 294 to 314 (ISVP…SSCC).

This sequence belongs to the polyprenol kinase family.

Its subcellular location is the plastid. The protein localises to the chloroplast membrane. The catalysed reaction is phytol + CTP = phytyl phosphate + CDP + H(+). It functions in the pathway cofactor biosynthesis; tocopherol biosynthesis. Involved in the activation and reutilization of phytol from chlorophyll degradation in plant metabolism, including tocopherol biosynthesis. Catalyzes the conversion of phytol to phytol monophosphate (PMP). This is Probable phytol kinase 1, chloroplastic from Oryza sativa subsp. japonica (Rice).